The sequence spans 75 residues: Small ribosomal subunit protein bS18 (75 aa).

Belongs to the bacterial ribosomal protein bS18 family. As to quaternary structure, part of the 30S ribosomal subunit. Forms a tight heterodimer with protein bS6.

In terms of biological role, binds as a heterodimer with protein bS6 to the central domain of the 16S rRNA, where it helps stabilize the platform of the 30S subunit. The polypeptide is Small ribosomal subunit protein bS18 (Anaplasma marginale (strain St. Maries)).